The following is a 285-amino-acid chain: NAD kinase (285 aa).

Catalysis depends on Asp-68, which acts as the Proton acceptor. NAD(+) is bound by residues 68-69, 142-143, Arg-153, Lys-170, Asp-172, and Gln-242; these read DG and ND.

This sequence belongs to the NAD kinase family. The cofactor is a divalent metal cation.

It is found in the cytoplasm. The enzyme catalyses NAD(+) + ATP = ADP + NADP(+) + H(+). Involved in the regulation of the intracellular balance of NAD and NADP, and is a key enzyme in the biosynthesis of NADP. Catalyzes specifically the phosphorylation on 2'-hydroxyl of the adenosine moiety of NAD to yield NADP. The sequence is that of NAD kinase from Koribacter versatilis (strain Ellin345).